The following is a 196-amino-acid chain: Ribosome maturation factor RimM (196 aa).

Positions Gln-118–Phe-196 constitute a PRC barrel domain.

Belongs to the RimM family. In terms of assembly, binds ribosomal protein uS19.

It localises to the cytoplasm. Functionally, an accessory protein needed during the final step in the assembly of 30S ribosomal subunit, possibly for assembly of the head region. Essential for efficient processing of 16S rRNA. May be needed both before and after RbfA during the maturation of 16S rRNA. It has affinity for free ribosomal 30S subunits but not for 70S ribosomes. The chain is Ribosome maturation factor RimM from Alcanivorax borkumensis (strain ATCC 700651 / DSM 11573 / NCIMB 13689 / SK2).